A 132-amino-acid chain; its full sequence is uncharacterized protein (132 aa).

Transmembrane regions (helical) follow at residues 44–64 (FMSF…FTFI) and 75–95 (IAMI…AMLF).

It localises to the cytoplasm. The protein resides in the membrane. This is an uncharacterized protein from Schizosaccharomyces pombe (strain 972 / ATCC 24843) (Fission yeast).